We begin with the raw amino-acid sequence, 348 residues long: D-lactate dehydrogenase kk1H (348 aa).

NAD(+) is bound by residues 158 to 159, Asp178, 208 to 209, 235 to 237, and Asp261; these read RI, CP, and TSR. Residue Arg237 is part of the active site. The active site involves Glu266. His298 acts as the Proton donor in catalysis.

This sequence belongs to the D-isomer specific 2-hydroxyacid dehydrogenase family.

It functions in the pathway secondary metabolite biosynthesis. D-lactate dehydrogenase; part of the gene cluster that mediates the biosynthesis of KK-1, a novel cyclic depsipeptide with 10 residues which is a promising active compound with high activity against many plant pathogens, especially Botrytis cinerea. Within the pathway, kk1H catalyzes in the synthesis of D-lactic acid from pyruvic acid, which is recognized by the A domain of the first kk1B module. The nonribosomal peptide synthetase (NRPS) kk1B catalyzes the elongation and cyclization of the decapeptide chain composed of 1 D-lactic acid residue (D-Lac), 1 pipecolic acid residue (Pip), 1 aspartic acid residue (Asp), 1 isoleucine residue (Ile), 1 glycine residue (Gly), 1 tyrosine residue (Tyr) and 4 valine residues (Val). The Asp, Ile and 3 Val residues are N-methylated by the 5 methyltransferase domains from the NRPS (found in modules 3, 5, 6, 7 and 9), whereas the Tyr residue is O-methylated by the cluster encoded O-methyltransferase kk1A. The thioesterase kk1J is likely to be involved in the corrective mechanism of peptide chain synthesis. The D-lactate dehydrogenase kk1H is involved in the synthesis of D-lactic acid from pyruvic acid, which is recognized by the A domain of the first kk1B module. The pyrroline-5-carboxylate reductase kk1I is involved in the synthesis of the L-pipecolic acid residue of KK-1 from delta-1-pyrroline-5-carboxylate (P5C), a metabolic intermediate of lysine. It still is unclear how kk1C and kk1D are involved in the production of KK-1. The chain is D-lactate dehydrogenase kk1H from Curvularia clavata.